The chain runs to 127 residues: Snaclec bothroinsularin subunit beta (127 aa).

Intrachain disulfides connect C2–C13, C30–C123, and C100–C115. The C-type lectin domain occupies 9 to 124; the sequence is YEGSCYRVFE…CTKLEYFVCE (116 aa).

This sequence belongs to the snaclec family. In terms of assembly, heterodimer of subunits alpha and beta; disulfide-linked. Expressed by the venom gland.

It is found in the secreted. In terms of biological role, thrombin and prothrombin (F2) inhibitor. The IC(50) of thrombin-induced platelet aggregation and fibrinocoagulation is 62 and 35 nM, respectively. Its inhibitory activity is at least 10-fold lower than that observed for other thrombin inhibitors. This Bothrops insularis (Golden lancehead) protein is Snaclec bothroinsularin subunit beta.